The following is a 100-amino-acid chain: Urease subunit gamma (100 aa).

It belongs to the urease gamma subunit family. In terms of assembly, heterotrimer of UreA (gamma), UreB (beta) and UreC (alpha) subunits. Three heterotrimers associate to form the active enzyme.

The protein localises to the cytoplasm. The enzyme catalyses urea + 2 H2O + H(+) = hydrogencarbonate + 2 NH4(+). It functions in the pathway nitrogen metabolism; urea degradation; CO(2) and NH(3) from urea (urease route): step 1/1. The protein is Urease subunit gamma of Staphylococcus epidermidis (strain ATCC 35984 / DSM 28319 / BCRC 17069 / CCUG 31568 / BM 3577 / RP62A).